A 220-amino-acid chain; its full sequence is Deoxyribose-phosphate aldolase (220 aa).

The active-site Proton donor/acceptor is the D89. The active-site Schiff-base intermediate with acetaldehyde is the K151. The active-site Proton donor/acceptor is the K180.

The protein belongs to the DeoC/FbaB aldolase family. DeoC type 1 subfamily.

It is found in the cytoplasm. The enzyme catalyses 2-deoxy-D-ribose 5-phosphate = D-glyceraldehyde 3-phosphate + acetaldehyde. Its pathway is carbohydrate degradation; 2-deoxy-D-ribose 1-phosphate degradation; D-glyceraldehyde 3-phosphate and acetaldehyde from 2-deoxy-alpha-D-ribose 1-phosphate: step 2/2. Catalyzes a reversible aldol reaction between acetaldehyde and D-glyceraldehyde 3-phosphate to generate 2-deoxy-D-ribose 5-phosphate. The chain is Deoxyribose-phosphate aldolase from Streptococcus pneumoniae (strain CGSP14).